The chain runs to 396 residues: Phosphoglycerate kinase (396 aa).

Substrate-binding positions include 21-23 (DFN), arginine 36, 59-62 (HLGK), arginine 119, and arginine 156. ATP is bound by residues lysine 206, glycine 294, glutamate 325, and 352-355 (GGDS).

Belongs to the phosphoglycerate kinase family. In terms of assembly, monomer.

It is found in the cytoplasm. The enzyme catalyses (2R)-3-phosphoglycerate + ATP = (2R)-3-phospho-glyceroyl phosphate + ADP. It participates in carbohydrate degradation; glycolysis; pyruvate from D-glyceraldehyde 3-phosphate: step 2/5. The protein is Phosphoglycerate kinase of Listeria monocytogenes serotype 4a (strain HCC23).